The chain runs to 355 residues: Protein RecA (355 aa).

Residue 65-72 (GPESSGKT) coordinates ATP.

The protein belongs to the RecA family.

The protein localises to the cytoplasm. Can catalyze the hydrolysis of ATP in the presence of single-stranded DNA, the ATP-dependent uptake of single-stranded DNA by duplex DNA, and the ATP-dependent hybridization of homologous single-stranded DNAs. It interacts with LexA causing its activation and leading to its autocatalytic cleavage. The protein is Protein RecA of Pseudomonas putida (strain GB-1).